We begin with the raw amino-acid sequence, 208 residues long: Thymidylate kinase (208 aa).

10–17 (GPEGSGKT) serves as a coordination point for ATP.

It belongs to the thymidylate kinase family.

It carries out the reaction dTMP + ATP = dTDP + ADP. Its function is as follows. Phosphorylation of dTMP to form dTDP in both de novo and salvage pathways of dTTP synthesis. The protein is Thymidylate kinase of Bacillus cereus (strain Q1).